The sequence spans 689 residues: Protein asunder (689 aa).

A coiled-coil region spans residues 521–550; it reads NGARLKLSKAKDQYRLLYRELEQLIQLNAT. Disordered regions lie at residues 591–619 and 665–689; these read SPERLEPISSVGASGSSNSNSLLKASKRR and GTKDKDAVTTGASITPNVKEESVRS. Residues 599-614 are compositionally biased toward low complexity; that stretch reads SSVGASGSSNSNSLLK. The Nuclear localization signal (NLS) motif lies at 613–619; that stretch reads LKASKRR.

This sequence belongs to the Integrator subunit 13 family. As to quaternary structure, belongs to the multiprotein complex Integrator, at least composed of IntS1, IntS2, IntS3, IntS4, omd/IntS5, IntS6, defl/IntS7, IntS8, IntS9, IntS10, IntS11, IntS12, asun/IntS13, IntS14 and IntS15. The core complex associates with protein phosphatase 2A subunits mts/PP2A and Pp2A-29B, to form the Integrator-PP2A (INTAC) complex. Phosphorylated.

It is found in the nucleus. It localises to the cytoplasm. Its subcellular location is the perinuclear region. Functionally, component of the integrator complex, a multiprotein complex that terminates RNA polymerase II (Pol II) transcription in the promoter-proximal region of genes. The integrator complex provides a quality checkpoint during transcription elongation by driving premature transcription termination of transcripts that are unfavorably configured for transcriptional elongation: the complex terminates transcription by (1) catalyzing dephosphorylation of the C-terminal domain (CTD) of Pol II subunit Polr2A/Rbp1 and Spt5, and (2) degrading the exiting nascent RNA transcript via endonuclease activity. The integrator complex is also involved in the 3'-end processing of the U7 snRNA, and also the spliceosomal snRNAs U1, U2, U4 and U5. In Drosophila sechellia (Fruit fly), this protein is Protein asunder (asun).